The following is a 500-amino-acid chain: Histidine ammonia-lyase (500 aa).

A cross-link (5-imidazolinone (Ala-Gly)) is located at residues 141-143 (ASG). Position 142 is a 2,3-didehydroalanine (Ser) (S142).

It belongs to the PAL/histidase family. Contains an active site 4-methylidene-imidazol-5-one (MIO), which is formed autocatalytically by cyclization and dehydration of residues Ala-Ser-Gly.

The protein localises to the cytoplasm. It carries out the reaction L-histidine = trans-urocanate + NH4(+). The protein operates within amino-acid degradation; L-histidine degradation into L-glutamate; N-formimidoyl-L-glutamate from L-histidine: step 1/3. The protein is Histidine ammonia-lyase of Shouchella clausii (strain KSM-K16) (Alkalihalobacillus clausii).